Reading from the N-terminus, the 104-residue chain is MQKIRRDDEIIVIAGKDKGKRGKVLKVLADDRLVVGGINLVKRHTKPNPMSGVQGGIVEKEAPLHASNVAIFNSETNKADRVGFKIEDGKKIRVFKSTQKPVGA.

Belongs to the universal ribosomal protein uL24 family. Part of the 50S ribosomal subunit.

Functionally, one of two assembly initiator proteins, it binds directly to the 5'-end of the 23S rRNA, where it nucleates assembly of the 50S subunit. In terms of biological role, one of the proteins that surrounds the polypeptide exit tunnel on the outside of the subunit. This chain is Large ribosomal subunit protein uL24, found in Ectopseudomonas mendocina (strain ymp) (Pseudomonas mendocina).